A 311-amino-acid polypeptide reads, in one-letter code: Ornithine carbamoyltransferase (311 aa).

Residues 54 to 57 (STRT), glutamine 81, arginine 105, and 132 to 135 (HPCQ) contribute to the carbamoyl phosphate site. L-ornithine contacts are provided by residues asparagine 163, aspartate 221, and 225–226 (SM). Residues 261-262 (CL) and arginine 289 each bind carbamoyl phosphate.

This sequence belongs to the aspartate/ornithine carbamoyltransferase superfamily. OTCase family.

The protein resides in the cytoplasm. It carries out the reaction carbamoyl phosphate + L-ornithine = L-citrulline + phosphate + H(+). The protein operates within amino-acid degradation; L-arginine degradation via ADI pathway; carbamoyl phosphate from L-arginine: step 2/2. Reversibly catalyzes the transfer of the carbamoyl group from carbamoyl phosphate (CP) to the N(epsilon) atom of ornithine (ORN) to produce L-citrulline. This is Ornithine carbamoyltransferase from Azoarcus sp. (strain BH72).